The sequence spans 332 residues: L-lactate dehydrogenase A chain (332 aa).

NAD(+) is bound by residues 29 to 57 and Arg99; that span reads GMVGMASAVSILLKDLCDELALVDVMEDK. Substrate is bound by residues Arg106, Asn138, and Arg169. NAD(+) is bound at residue Asn138. Catalysis depends on His193, which acts as the Proton acceptor. Residue Thr248 coordinates substrate.

This sequence belongs to the LDH/MDH superfamily. LDH family. In terms of assembly, homotetramer.

It is found in the cytoplasm. The catalysed reaction is (S)-lactate + NAD(+) = pyruvate + NADH + H(+). The protein operates within fermentation; pyruvate fermentation to lactate; (S)-lactate from pyruvate: step 1/1. Its function is as follows. Interconverts simultaneously and stereospecifically pyruvate and lactate with concomitant interconversion of NADH and NAD(+). The sequence is that of L-lactate dehydrogenase A chain (ldha) from Sphyraena idiastes (Pelican barracuda).